A 478-amino-acid chain; its full sequence is Alpha-1,3-mannosyl-glycoprotein 4-beta-N-acetylglucosaminyltransferase C (478 aa).

Residues 1 to 23 lie on the Cytoplasmic side of the membrane; that stretch reads MFKFHQVKHIFEILDKMRCLRKR. A helical; Signal-anchor for type II membrane protein membrane pass occupies residues 24 to 44; that stretch reads FTVSFLGVLVIFLLFMNLYIE. Residues 45–478 lie on the Lumenal side of the membrane; it reads DSYVLEGDKQ…IIRSISIWTS (434 aa). N84, N215, and N348 each carry an N-linked (GlcNAc...) asparagine glycan.

Belongs to the glycosyltransferase 54 family. A divalent metal cation is required as a cofactor.

Its subcellular location is the golgi apparatus membrane. The catalysed reaction is N(4)-{beta-D-GlcNAc-(1-&gt;2)-alpha-D-Man-(1-&gt;3)-[beta-D-GlcNAc-(1-&gt;2)-alpha-D-Man-(1-&gt;6)]-beta-D-Man-(1-&gt;4)-beta-D-GlcNAc-(1-&gt;4)-beta-D-GlcNAc}-L-asparaginyl-[protein] + UDP-N-acetyl-alpha-D-glucosamine = N(4)-{beta-D-GlcNAc-(1-&gt;2)-[beta-D-GlcNAc-(1-&gt;4)]-alpha-D-Man-(1-&gt;3)-[beta-D-GlcNAc-(1-&gt;2)-alpha-D-Man-(1-&gt;6)]-beta-D-Man-(1-&gt;4)-beta-D-GlcNAc-(1-&gt;4)-beta-D-GlcNAc}-L-asparaginyl-[protein] + UDP + H(+). The protein operates within protein modification; protein glycosylation. In terms of biological role, glycosyltransferase that participates in the transfer of N-acetylglucosamine (GlcNAc) to the core mannose residues of N-linked glycans. Catalyzes the formation of the GlcNAcbeta1-4 branch on the GlcNAcbeta1-2Manalpha1-3 arm of the core structure of N-linked glycans. Essential for the production of tri- and tetra-antennary N-linked sugar chains. Does not catalyze the transfer of GlcNAc to the Manalpha1-6 arm to form GlcNAcBeta1-4Manalpha1-6 linkage ('GnT-VI' activity). The polypeptide is Alpha-1,3-mannosyl-glycoprotein 4-beta-N-acetylglucosaminyltransferase C (MGAT4C) (Sus scrofa (Pig)).